Reading from the N-terminus, the 945-residue chain is Isoleucine--tRNA ligase (945 aa).

Residues 66–76 (PYANGDIHLGH) carry the 'HIGH' region motif. E581 provides a ligand contact to L-isoleucyl-5'-AMP. A 'KMSKS' region motif is present at residues 622-626 (KMSKS). Residue K625 participates in ATP binding. Residues C908, C911, C928, and C931 each coordinate Zn(2+).

This sequence belongs to the class-I aminoacyl-tRNA synthetase family. IleS type 1 subfamily. In terms of assembly, monomer. Zn(2+) serves as cofactor.

It is found in the cytoplasm. It catalyses the reaction tRNA(Ile) + L-isoleucine + ATP = L-isoleucyl-tRNA(Ile) + AMP + diphosphate. In terms of biological role, catalyzes the attachment of isoleucine to tRNA(Ile). As IleRS can inadvertently accommodate and process structurally similar amino acids such as valine, to avoid such errors it has two additional distinct tRNA(Ile)-dependent editing activities. One activity is designated as 'pretransfer' editing and involves the hydrolysis of activated Val-AMP. The other activity is designated 'posttransfer' editing and involves deacylation of mischarged Val-tRNA(Ile). In Burkholderia orbicola (strain MC0-3), this protein is Isoleucine--tRNA ligase.